Consider the following 316-residue polypeptide: MNDVSKASLPKAIFLMGPTASGKTALAIELRKVLPVELISVDSALIYRGMDIGTAKPNADELKAAPHRLLDIRDPSQAYSAADFRRDALAQMAEITAAGRIPLLVGGTMLYFKALLEGLSPLPSADPEVRSRIEQQAAELGWEALHQQLQEIDPVAAARIHPNDPQRLSRALEVFFISGKTLTELTQTSGDALPYQVHQFAIAPASRELLHQRIELRFHQMLASGFEAEVRALFARGDLHTDLPSIRCVGYRQMWSYIEGEISYDEMVYRGVCATRQLAKRQMTWLRGWEGVRWLDSENPDRARKEVLQVVGAIAD.

G17 to T24 lines the ATP pocket. T19–T24 is a binding site for substrate. Interaction with substrate tRNA stretches follow at residues D42–L45, Q166–R170, and R247–R252.

This sequence belongs to the IPP transferase family. In terms of assembly, monomer. Mg(2+) serves as cofactor.

It carries out the reaction adenosine(37) in tRNA + dimethylallyl diphosphate = N(6)-dimethylallyladenosine(37) in tRNA + diphosphate. In terms of biological role, catalyzes the transfer of a dimethylallyl group onto the adenine at position 37 in tRNAs that read codons beginning with uridine, leading to the formation of N6-(dimethylallyl)adenosine (i(6)A). The protein is tRNA dimethylallyltransferase of Salmonella schwarzengrund (strain CVM19633).